We begin with the raw amino-acid sequence, 136 residues long: Large ribosomal subunit protein uL16 (136 aa).

The protein belongs to the universal ribosomal protein uL16 family. In terms of assembly, part of the 50S ribosomal subunit.

Its function is as follows. Binds 23S rRNA and is also seen to make contacts with the A and possibly P site tRNAs. The sequence is that of Large ribosomal subunit protein uL16 from Rickettsia prowazekii (strain Madrid E).